The chain runs to 551 residues: Protein MTL1 (551 aa).

Residues 1–35 (MASCNPTRKKSSASSLSMWRTILMALTTLPLSVLS) form the signal peptide. Residues 36-361 (QELVPANSTT…HSGLSKKNRN (326 aa)) are Extracellular-facing. Disordered stretches follow at residues 108–143 (MQVSSSSTSSSSSEVTSSSSSSSISPSSSSSTIISS), 206–227 (PSSSTSSPPSSSSELTSSSYSS), and 243–263 (SSSSSSSSSSSSSSSSSSSSS). A helical transmembrane segment spans residues 362–382 (IIIGCVVGIGAPLILILLILI). Over 383–551 (YMFCVQPKKT…PNNGLNITNY (169 aa)) the chain is Cytoplasmic. The interval 429–513 (SSDSPIGSNN…SNSNSQDYND (85 aa)) is disordered. A compositionally biased stretch (polar residues) spans 430–441 (SDSPIGSNNIQN). Positions 466–477 (GYDDDDDDDAND) are enriched in acidic residues. Residues S481 and S482 each carry the phosphoserine modification. The segment covering 498–508 (SASYSMSNSNS) has biased composition (low complexity).

The protein belongs to the MID2 like cell wall stress sensor family.

It is found in the membrane. In terms of biological role, involved in cell integrity signaling during vegetative growth at elevated temperature. Acts positively on the PKC1-MAPK pathway. Cell membrane sensor of oxidative stress in the cell integrity pathway upstream of PKC1. Required to transmit the oxidative signal to SLT2 and to restore the correct actin organization following oxidative stress. Multicopy suppressor of 1,3-beta-glucan synthase (GS) mutation. Also suppresses RGD1 null mutations. This Saccharomyces cerevisiae (strain ATCC 204508 / S288c) (Baker's yeast) protein is Protein MTL1 (MTL1).